We begin with the raw amino-acid sequence, 305 residues long: Regulator of microtubule dynamics protein 1 (305 aa).

An N6-succinyllysine modification is found at Lys-160. TPR repeat units follow at residues 163–199 and 217–253; these read AICI…NPKD and PWYQ…DPNF. Position 245 is an N6-succinyllysine (Lys-245).

It belongs to the RMDN family. Interacts with microtubules.

It is found in the cytoplasm. It localises to the cytoskeleton. The protein resides in the spindle. The protein localises to the spindle pole. The sequence is that of Regulator of microtubule dynamics protein 1 (Rmdn1) from Mus musculus (Mouse).